The primary structure comprises 649 residues: UvrABC system protein C (649 aa).

One can recognise a GIY-YIG domain in the interval 12–91; it reads SSPGVYLMKS…IKQHRPKYNI (80 aa). In terms of domain architecture, UVR spans 201 to 236; the sequence is NEVARLYRSKMNLASEQMRYEDAARYRDLLRAIEVT. The tract at residues 603 to 649 is disordered; sequence RLHGGPLPNPPPPGEGAMGDGSIPSPRNGVMDDSIPSPSGRGWPKAG.

This sequence belongs to the UvrC family. As to quaternary structure, interacts with UvrB in an incision complex.

Its subcellular location is the cytoplasm. In terms of biological role, the UvrABC repair system catalyzes the recognition and processing of DNA lesions. UvrC both incises the 5' and 3' sides of the lesion. The N-terminal half is responsible for the 3' incision and the C-terminal half is responsible for the 5' incision. This Geobacter sp. (strain M21) protein is UvrABC system protein C.